A 413-amino-acid chain; its full sequence is Glutamate-1-semialdehyde 2,1-aminomutase (413 aa).

N6-(pyridoxal phosphate)lysine is present on Lys-260.

This sequence belongs to the class-III pyridoxal-phosphate-dependent aminotransferase family. HemL subfamily. Pyridoxal 5'-phosphate is required as a cofactor.

Its subcellular location is the cytoplasm. It carries out the reaction (S)-4-amino-5-oxopentanoate = 5-aminolevulinate. It functions in the pathway porphyrin-containing compound metabolism; protoporphyrin-IX biosynthesis; 5-aminolevulinate from L-glutamyl-tRNA(Glu): step 2/2. This chain is Glutamate-1-semialdehyde 2,1-aminomutase, found in Methanoregula boonei (strain DSM 21154 / JCM 14090 / 6A8).